Here is a 428-residue protein sequence, read N- to C-terminus: Beta-1,3-galactosyl-O-glycosyl-glycoprotein beta-1,6-N-acetylglucosaminyltransferase (428 aa).

At 1-9 (MLRTLLRRR) the chain is on the cytoplasmic side. A mediates interaction with GOLPH3 and is necessary and sufficient for localization to the Golgi region spans residues 5–9 (LLRRR). The chain crosses the membrane as a helical; Signal-anchor for type II membrane protein span at residues 10–32 (LFSYPTKYYFMVLVLSLITFSVL). The interval 33–121 (RIHQKPEFVS…EPLSKEEAEF (89 aa)) is stem region. Topologically, residues 33 to 428 (RIHQKPEFVS…RHKALETLKH (396 aa)) are lumenal. Residues asparagine 58 and asparagine 95 are each glycosylated (N-linked (GlcNAc...) asparagine). Disulfide bonds link cysteine 59–cysteine 413, cysteine 100–cysteine 172, cysteine 151–cysteine 199, and cysteine 372–cysteine 381. Residues 122-428 (PIAYSIVVHH…RHKALETLKH (307 aa)) form a catalytic region. UDP-N-acetyl-alpha-D-glucosamine-binding positions include 128–130 (VVH), 155–157 (DTK), and tyrosine 187. Residues glutamate 243, lysine 251, arginine 254, glutamate 320, lysine 341, and tyrosine 358 each contribute to the a glycoprotein site. Residue glutamate 320 is the Nucleophile of the active site. Residues arginine 378 and lysine 401 each coordinate UDP-N-acetyl-alpha-D-glucosamine.

It belongs to the glycosyltransferase 14 family. As to quaternary structure, interacts with GOLPH3; may control GCNT1 retention in the Golgi. As to expression, highly expressed in activated T-lymphocytes and myeloid cells.

The protein localises to the golgi apparatus membrane. The enzyme catalyses a 3-O-[beta-D-galactosyl-(1-&gt;3)-N-acetyl-alpha-D-galactosaminyl]-L-seryl-[protein] + UDP-N-acetyl-alpha-D-glucosamine = 3-O-{beta-D-galactosyl-(1-&gt;3)-[N-acetyl-beta-D-glucosaminyl-(1-&gt;6)]-N-acetyl-alpha-D-galactosaminyl}-L-seryl-[protein] + UDP + H(+). The catalysed reaction is a 3-O-[beta-D-galactosyl-(1-&gt;3)-N-acetyl-alpha-D-galactosaminyl]-L-threonyl-[protein] + UDP-N-acetyl-alpha-D-glucosamine = a 3-O-{beta-D-galactosyl-(1-&gt;3)-[N-acetyl-beta-D-glucosaminyl-(1-&gt;6)]-N-acetyl-alpha-D-galactosaminyl}-L-threonyl-[protein] + UDP + H(+). It catalyses the reaction a globoside GalGb4Cer + UDP-N-acetyl-alpha-D-glucosamine = a globoside GlcNAc-(beta1-&gt;6)-GalGb4Cer + UDP + H(+). It carries out the reaction a ganglioside GA1 + UDP-N-acetyl-alpha-D-glucosamine = a ganglioside beta-D-GlcNAc-(1-&gt;6)-GA1 + UDP + H(+). The protein operates within protein modification; protein glycosylation. It participates in glycolipid biosynthesis. In terms of biological role, glycosyltransferase that catalyzes the transfer of an N-acetylglucosamine (GlcNAc) moiety in beta1-6 linkage from UDP-GlcNAc onto mucin-type core 1 O-glycan to form the branched mucin-type core 2 O-glycan. The catalysis is metal ion-independent and occurs with inversion of the anomeric configuration of sugar donor. Selectively involved in synthesis of mucin-type core 2 O-glycans that serve as scaffolds for the display of selectin ligand sialyl Lewis X epitope by myeloid cells, with an impact on homeostasis and recruitment to inflammatory sites. Can also act on glycolipid substrates. Transfers GlcNAc moiety to GalGb4Cer globosides in a reaction step to the synthesis of stage-specific embryonic antigen 1 (SSEA-1) determinant. Can use Galbeta1-3GalNAcalpha1- and Galbeta1-3GalNAcbeta1- oligosaccharide derivatives as acceptor substrates. The protein is Beta-1,3-galactosyl-O-glycosyl-glycoprotein beta-1,6-N-acetylglucosaminyltransferase (GCNT1) of Homo sapiens (Human).